We begin with the raw amino-acid sequence, 147 residues long: Small ribosomal subunit protein bS16 (147 aa).

The disordered stretch occupies residues 89–147 (AWTHGNNPKKAEPGKKAQERAKERADKAEAKAAAAAEAAAAPAEEAPAEAAPAEETSES). The segment covering 97-118 (KKAEPGKKAQERAKERADKAEA) has biased composition (basic and acidic residues). The segment covering 119–147 (KAAAAAEAAAAPAEEAPAEAAPAEETSES) has biased composition (low complexity).

It belongs to the bacterial ribosomal protein bS16 family.

This Hyphomonas neptunium (strain ATCC 15444) protein is Small ribosomal subunit protein bS16.